A 145-amino-acid chain; its full sequence is Large ribosomal subunit protein uL13 (145 aa).

This sequence belongs to the universal ribosomal protein uL13 family. Part of the 50S ribosomal subunit.

Functionally, this protein is one of the early assembly proteins of the 50S ribosomal subunit, although it is not seen to bind rRNA by itself. It is important during the early stages of 50S assembly. The polypeptide is Large ribosomal subunit protein uL13 (Staphylococcus aureus (strain Mu3 / ATCC 700698)).